The sequence spans 318 residues: Nucleotide-binding protein Lcho_3490 (318 aa).

Residue 35 to 42 coordinates ATP; that stretch reads GISGGGKS. A GTP-binding site is contributed by 84–87; the sequence is DVRN.

This sequence belongs to the RapZ-like family.

Displays ATPase and GTPase activities. The protein is Nucleotide-binding protein Lcho_3490 of Leptothrix cholodnii (strain ATCC 51168 / LMG 8142 / SP-6) (Leptothrix discophora (strain SP-6)).